The chain runs to 310 residues: p-hydroxybenzoic acid efflux pump subunit AaeA (310 aa).

The chain crosses the membrane as a helical span at residues 12 to 32 (AITLVLVILAFIAIFRAWVYY).

It belongs to the membrane fusion protein (MFP) (TC 8.A.1) family.

The protein localises to the cell inner membrane. Forms an efflux pump with AaeB. The chain is p-hydroxybenzoic acid efflux pump subunit AaeA from Salmonella schwarzengrund (strain CVM19633).